The following is a 111-amino-acid chain: 2Fe-2S ferredoxin (111 aa).

In terms of domain architecture, 2Fe-2S ferredoxin-type spans 2–104 (PKIVILPHQD…DLVVEIPRYT (103 aa)). Residues C42, C48, C51, and C87 each contribute to the [2Fe-2S] cluster site.

It belongs to the adrenodoxin/putidaredoxin family. Requires [2Fe-2S] cluster as cofactor.

Its function is as follows. Ferredoxin are iron-sulfur proteins that transfer electrons in a wide variety of metabolic reactions. Although the function of this ferredoxin is unknown it is probable that it has a role as a cellular electron transfer protein. Involved in the in vivo assembly of the Fe-S clusters in a wide variety of iron-sulfur proteins. The chain is 2Fe-2S ferredoxin (fdx) from Escherichia coli O157:H7.